A 145-amino-acid polypeptide reads, in one-letter code: Histone H2B (145 aa).

The tract at residues 1–52 (MAPKAAAGKKPAEKKPVEEKKAEEVPAEKKPKAGKKLPKDAGRPDKKKKRAK) is disordered. An N6-acetyllysine mark is found at Lys9, Lys35, and Lys36. Residues 10 to 44 (KPAEKKPVEEKKAEEVPAEKKPKAGKKLPKDAGRP) show a composition bias toward basic and acidic residues. Lys141 participates in a covalent cross-link: Glycyl lysine isopeptide (Lys-Gly) (interchain with G-Cter in ubiquitin).

Belongs to the histone H2B family. As to quaternary structure, the nucleosome is a histone octamer containing two molecules each of H2A, H2B, H3 and H4 assembled in one H3-H4 heterotetramer and two H2A-H2B heterodimers. The octamer wraps approximately 147 bp of DNA. In terms of processing, can be acetylated to form H2BK6ac, H2BK33ac and H2BK34ac. Monoubiquitinated to form H2BK143ub1; may give a specific tag for epigenetic transcriptional activation. In terms of tissue distribution, in anthers, floral buds, pollen, petals and fruits.

Its subcellular location is the nucleus. It localises to the chromosome. Core component of nucleosome. Nucleosomes wrap and compact DNA into chromatin, limiting DNA accessibility to the cellular machineries which require DNA as a template. Histones thereby play a central role in transcription regulation, DNA repair, DNA replication and chromosomal stability. DNA accessibility is regulated via a complex set of post-translational modifications of histones, also called histone code, and nucleosome remodeling. The chain is Histone H2B (HIS2B) from Capsicum annuum (Capsicum pepper).